A 166-amino-acid chain; its full sequence is MSDSPKPQLPPSPQGDHCLVHQQELEAVTEKWFEIMVRVQPHHTDYGGVVWHGTYLTWLETARVECLRSIGVDFADLVKLGCDLPVVSLALRYHRAIRLGQTAVIKVQMQEIQKVRLEWQNQIVCLETGEPCVTGKITLVAIDPAKGKIMRRLPPVVQEHLLKLRQ.

The active site involves aspartate 45.

The protein belongs to the 4-hydroxybenzoyl-CoA thioesterase family.

The polypeptide is Putative esterase sll0410 (Synechocystis sp. (strain ATCC 27184 / PCC 6803 / Kazusa)).